The primary structure comprises 212 residues: Pyridoxine/pyridoxamine 5'-phosphate oxidase (212 aa).

Substrate is bound by residues 8 to 11 (RRTY) and lysine 66. FMN contacts are provided by residues 61–66 (RIVLLK), 76–77 (FT), arginine 82, lysine 83, and glutamine 105. The substrate site is built by tyrosine 123, arginine 127, and serine 131. Residues 140-141 (QS) and tryptophan 184 each bind FMN. Position 190 to 192 (190 to 192 (RLH)) interacts with substrate. Position 194 (arginine 194) interacts with FMN.

It belongs to the pyridoxamine 5'-phosphate oxidase family. Homodimer. Requires FMN as cofactor.

The enzyme catalyses pyridoxamine 5'-phosphate + O2 + H2O = pyridoxal 5'-phosphate + H2O2 + NH4(+). It carries out the reaction pyridoxine 5'-phosphate + O2 = pyridoxal 5'-phosphate + H2O2. It functions in the pathway cofactor metabolism; pyridoxal 5'-phosphate salvage; pyridoxal 5'-phosphate from pyridoxamine 5'-phosphate: step 1/1. The protein operates within cofactor metabolism; pyridoxal 5'-phosphate salvage; pyridoxal 5'-phosphate from pyridoxine 5'-phosphate: step 1/1. In terms of biological role, catalyzes the oxidation of either pyridoxine 5'-phosphate (PNP) or pyridoxamine 5'-phosphate (PMP) into pyridoxal 5'-phosphate (PLP). This is Pyridoxine/pyridoxamine 5'-phosphate oxidase from Cupriavidus pinatubonensis (strain JMP 134 / LMG 1197) (Cupriavidus necator (strain JMP 134)).